A 471-amino-acid polypeptide reads, in one-letter code: Methylenetetrahydrofolate--tRNA-(uracil-5-)-methyltransferase TrmFO (471 aa).

FAD is bound at residue 9 to 14 (GGGLSG).

The protein belongs to the MnmG family. TrmFO subfamily. It depends on FAD as a cofactor.

Its subcellular location is the cytoplasm. It carries out the reaction uridine(54) in tRNA + (6R)-5,10-methylene-5,6,7,8-tetrahydrofolate + NADH + H(+) = 5-methyluridine(54) in tRNA + (6S)-5,6,7,8-tetrahydrofolate + NAD(+). The enzyme catalyses uridine(54) in tRNA + (6R)-5,10-methylene-5,6,7,8-tetrahydrofolate + NADPH + H(+) = 5-methyluridine(54) in tRNA + (6S)-5,6,7,8-tetrahydrofolate + NADP(+). Catalyzes the folate-dependent formation of 5-methyl-uridine at position 54 (M-5-U54) in all tRNAs. The polypeptide is Methylenetetrahydrofolate--tRNA-(uracil-5-)-methyltransferase TrmFO (Beijerinckia indica subsp. indica (strain ATCC 9039 / DSM 1715 / NCIMB 8712)).